A 387-amino-acid chain; its full sequence is Queuine tRNA-ribosyltransferase (387 aa).

Asp102 serves as the catalytic Proton acceptor. Substrate is bound by residues 102–106 (DSGGF), Asp156, Gln205, and Gly232. The interval 263–269 (GVGTPED) is RNA binding. The Nucleophile role is filled by Asp282. The interval 287 to 291 (TRNAR) is RNA binding; important for wobble base 34 recognition. The Zn(2+) site is built by Cys320, Cys322, Cys325, and His351.

The protein belongs to the queuine tRNA-ribosyltransferase family. As to quaternary structure, homodimer. Within each dimer, one monomer is responsible for RNA recognition and catalysis, while the other monomer binds to the replacement base PreQ1. It depends on Zn(2+) as a cofactor.

It carries out the reaction 7-aminomethyl-7-carbaguanine + guanosine(34) in tRNA = 7-aminomethyl-7-carbaguanosine(34) in tRNA + guanine. Its pathway is tRNA modification; tRNA-queuosine biosynthesis. In terms of biological role, catalyzes the base-exchange of a guanine (G) residue with the queuine precursor 7-aminomethyl-7-deazaguanine (PreQ1) at position 34 (anticodon wobble position) in tRNAs with GU(N) anticodons (tRNA-Asp, -Asn, -His and -Tyr). Catalysis occurs through a double-displacement mechanism. The nucleophile active site attacks the C1' of nucleotide 34 to detach the guanine base from the RNA, forming a covalent enzyme-RNA intermediate. The proton acceptor active site deprotonates the incoming PreQ1, allowing a nucleophilic attack on the C1' of the ribose to form the product. After dissociation, two additional enzymatic reactions on the tRNA convert PreQ1 to queuine (Q), resulting in the hypermodified nucleoside queuosine (7-(((4,5-cis-dihydroxy-2-cyclopenten-1-yl)amino)methyl)-7-deazaguanosine). The sequence is that of Queuine tRNA-ribosyltransferase from Polaromonas naphthalenivorans (strain CJ2).